The sequence spans 365 residues: P43 5S RNA-binding protein (365 aa).

C2H2-type zinc fingers lie at residues 15–39 (FRCP…MAGH), 45–69 (WKCG…MKRH), 75–100 (HSCP…LYKH), 106–130 (LKCS…VSEH), 136–160 (SVCD…HRRH), 163–187 (YRCS…LKKH), 191–213 (LQCA…KATH), 220–245 (LPCP…RKVH), and 251–275 (HRCP…LVVH).

The 42S RNP particle comprises four subunits each of which contains one molecule of 5S RNA, three molecules of tRNA, two molecules of p50 (EF1-alpha) and one molecule of the 5S RNA binding protein 43.

P43 is a 5S RNA binding protein which is a major constituent of oocytes and comprises part of a 42S ribonucleoprotein storage particle. The polypeptide is P43 5S RNA-binding protein (Xenopus borealis (Kenyan clawed frog)).